A 536-amino-acid polypeptide reads, in one-letter code: Pre-mRNA-splicing regulator female-lethal(2)D (536 aa).

The segment at Met-1–Gln-91 is disordered. Over residues Gln-28 to Ser-39 the composition is skewed to low complexity. A compositionally biased stretch (basic residues) spans His-57–His-69. Residues Gln-72–Gln-91 show a composition bias toward low complexity. Positions Lys-254 to Ala-319 form a coiled coil. Residues Ala-424–His-450 are disordered.

This sequence belongs to the fl(2)d family. In terms of assembly, component of the WMM complex, a N6-methyltransferase complex composed of a catalytic subcomplex, named MAC, and of an associated subcomplex, named MACOM. The MAC subcomplex is composed of Ime4/Mettl3 and Mettl14. The MACOM subcomplex is composed of fl(2)d, Flacc/Xio, Hakai, vir, and, in some cases of nito. Interacts with vir and msk. Part of a complex containing fl(2)d, Sxl and vir.

The protein resides in the nucleus. Associated component of the WMM complex, a complex that mediates N6-methyladenosine (m6A) methylation of mRNAs, a modification that plays a role in the efficiency of mRNA splicing and is required for sex determination. Required for sex determination and dosage compensation via Sxl alternative splicing: m6A methylation acts as a key regulator of Sxl pre-mRNA and promotes female-specific alternative splicing of Sxl, which determines female physiognomy. M6A methylation is also required for neuronal functions. Required for proper inclusion of regulated exons in Ubx transcripts, leading to isoforms Ia/b and IIa/b. In Drosophila melanogaster (Fruit fly), this protein is Pre-mRNA-splicing regulator female-lethal(2)D.